Reading from the N-terminus, the 208-residue chain is NAD(P)H-quinone oxidoreductase subunit M, chloroplastic (208 aa).

The N-terminal 21 residues, 1 to 21 (MAATSSYTACTKFSMLGWIGG), are a transit peptide targeting the chloroplast. A compositionally biased stretch (low complexity) spans 37 to 49 (QQAEVEESQQVNA). The interval 37-70 (QQAEVEESQQVNAQEEEQEKMKQQGKQKLPRPVE) is disordered.

The protein belongs to the NDH complex subunit M family. As to quaternary structure, part of the chloroplast NDH complex, composed of a mixture of chloroplast and nucleus encoded subunits. Component of the NDH subcomplex A, at least composed of ndhH, ndhI, ndhJ, ndhK, ndhL, ndhM, ndhN and ndhO.

It is found in the plastid. The protein localises to the chloroplast thylakoid membrane. The catalysed reaction is a plastoquinone + NADH + (n+1) H(+)(in) = a plastoquinol + NAD(+) + n H(+)(out). The enzyme catalyses a plastoquinone + NADPH + (n+1) H(+)(in) = a plastoquinol + NADP(+) + n H(+)(out). Its function is as follows. NDH shuttles electrons from NAD(P)H:plastoquinone, via FMN and iron-sulfur (Fe-S) centers, to quinones in the photosynthetic chain and possibly in a chloroplast respiratory chain. The immediate electron acceptor for the enzyme in this species is believed to be plastoquinone. Couples the redox reaction to proton translocation, and thus conserves the redox energy in a proton gradient. In Vitis vinifera (Grape), this protein is NAD(P)H-quinone oxidoreductase subunit M, chloroplastic.